The following is a 519-amino-acid chain: Na(+)/H(+) exchange regulatory cofactor NHE-RF3 (519 aa).

The PDZ 1 domain occupies Glu-9–Asp-90. Residues Ser-108, Ser-148, Ser-192, Ser-250, Ser-334, and Ser-348 each carry the phosphoserine modification. PDZ domains are found at residues Arg-134–Glu-215 and Ile-243–Glu-323. The interval Gly-347–His-374 is disordered. The span at Pro-357–Asp-367 shows a compositional bias: polar residues. Residues Leu-378–Lys-458 enclose the PDZ 4 domain. Thr-451 is subject to Phosphothreonine. The tract at residues Asp-479–Met-519 is disordered. Positions Pro-482–His-504 are enriched in basic and acidic residues. Residues Ser-492, Ser-508, Ser-510, Ser-511, Ser-512, and Ser-514 each carry the phosphoserine modification. Over residues Ser-505–Met-519 the composition is skewed to low complexity.

The protein belongs to the NHER family. Interacts with PDZK1IP1 and ABCC2. Interacts (via PDZ domains 1 and 3) with SCARB1 (C-terminal domain). Forms a heterodimeric complex with NHERF1. Interacts with AKAP2, BCR, CFTR, SLC22A12, SLC22A4, SLC22A5, NHERF2 and SLC17A1. Component of a complex, composed of PDZK1, SYNGAP1, KLHL17 and NMDA receptors. Interacts (via PDZ1 domain) directly with KLHL17; the interaction is important for integrity of actin cytoskeleton structures in neurons. Interacts (via the first PDZ domain) with PTGIR (via non-isoprenylated C-terminus). Interacts (via C-terminal PDZ domain) with SLC26A6 (via C-terminal domain). Interacts (via C-terminal PDZ domain) with SLC9A3 (via C-terminal domain). Interacts (via PDZ domains 1 and 3) with SLC5A8 (via PDZ-binding motif); interaction increases nicotinate transport activity of SLC5A8. As to expression, expression is limited to epithelial cells. Expressed in the kidney (brush border of proximal tubule), pancreas, liver, and small intestine. Expressed at a lower level in the adrenal cortex, testis and stomach. Overexpressed in breast, renal and lung carcinomas.

It localises to the membrane. It is found in the cell membrane. A scaffold protein that connects plasma membrane proteins and regulatory components, regulating their surface expression in epithelial cells apical domains. May be involved in the coordination of a diverse range of regulatory processes for ion transport and second messenger cascades. In complex with NHERF1, may cluster proteins that are functionally dependent in a mutual fashion and modulate the trafficking and the activity of the associated membrane proteins. May play a role in the cellular mechanisms associated with multidrug resistance through its interaction with ABCC2 and PDZK1IP1. May potentiate the CFTR chloride channel activity. Required for normal cell-surface expression of SCARB1. Plays a role in maintaining normal plasma cholesterol levels via its effects on SCARB1. Plays a role in the normal localization and function of the chloride-anion exchanger SLC26A6 to the plasma membrane in the brush border of the proximal tubule of the kidney. May be involved in the regulation of proximal tubular Na(+)-dependent inorganic phosphate cotransport therefore playing an important role in tubule function. The polypeptide is Na(+)/H(+) exchange regulatory cofactor NHE-RF3 (PDZK1) (Homo sapiens (Human)).